Reading from the N-terminus, the 578-residue chain is Translation initiation factor eIF2B subunit gamma (578 aa).

Serine 296 and serine 300 each carry phosphoserine. Disordered stretches follow at residues glutamine 298 to serine 337 and aspartate 535 to arginine 578. Position 306 is a phosphothreonine (threonine 306). The segment covering glutamate 544–arginine 578 has biased composition (acidic residues).

It belongs to the eIF-2B gamma/epsilon subunits family. As to quaternary structure, component of the translation initiation factor 2B (eIF2B) complex which is a heterodecamer of two sets of five different subunits: alpha, beta, gamma, delta and epsilon. Subunits alpha, beta and delta comprise a regulatory subcomplex and subunits epsilon and gamma comprise a catalytic subcomplex. Within the complex, the hexameric regulatory complex resides at the center, with the two heterodimeric catalytic subcomplexes bound on opposite sides.

The protein resides in the cytoplasm. Its subcellular location is the cytosol. Its function is as follows. Acts as a component of the translation initiation factor 2B (eIF2B) complex, which catalyzes the exchange of GDP for GTP on the eukaryotic initiation factor 2 (eIF2) complex gamma subunit. Its guanine nucleotide exchange factor activity is repressed when bound to eIF2 complex phosphorylated on the alpha subunit, thereby limiting the amount of methionyl-initiator methionine tRNA available to the ribosome and consequently global translation is repressed. It activates the synthesis of GCN4 in yeast under amino acid starvation conditions by suppressing the inhibitory effects of multiple AUG codons present in the leader of GCN4 mRNA. It may promote either repression or activation of GCN4 expression depending on amino acid availability. GCD1 stabilizes the interaction between eIF2 and GCD6 and stimulates the catalytic activity in vitro. The sequence is that of Translation initiation factor eIF2B subunit gamma (GCD1) from Saccharomyces cerevisiae (strain ATCC 204508 / S288c) (Baker's yeast).